We begin with the raw amino-acid sequence, 243 residues long: R-spondin-2 (243 aa).

The N-terminal stretch at 1-21 is a signal peptide; sequence MQFRLFSFALIILNCMDYSHC. Intrachain disulfides connect Cys-40–Cys-46, Cys-43–Cys-52, Cys-55–Cys-74, Cys-78–Cys-93, Cys-96–Cys-104, Cys-101–Cys-110, Cys-113–Cys-124, Cys-128–Cys-141, Cys-145–Cys-187, Cys-156–Cys-163, and Cys-196–Cys-203. An FU repeat occupies 90–134; that stretch reads MNRCARCRIENCDSCFSKDFCTKCKVGFYLHRGRCFDECPDGFAP. The region spanning 144–204 is the TSP type-1 domain; the sequence is GCEVGHWSEW…RCKMTMRHCP (61 aa). Asn-160 carries an N-linked (GlcNAc...) asparagine glycan. Residues 204–224 show a composition bias toward basic residues; it reads PGGKRTPKAKEKRNKKKKRKL. Positions 204 to 243 are disordered; that stretch reads PGGKRTPKAKEKRNKKKKRKLIERAQEQHSVFLATDRANQ.

Belongs to the R-spondin family. As to quaternary structure, interacts with WNT1. Binds heparin. Interacts with LGR4, LGR5 and LGR6. Interacts with E3 ubiquitin ligases RNF43 and ZNRF3.

It localises to the secreted. Functionally, activator of the canonical Wnt signaling pathway by acting as a ligand for LGR4-6 receptors. Upon binding to LGR4-6 (LGR4, LGR5 or LGR6), LGR4-6 associate with phosphorylated LRP6 and frizzled receptors that are activated by extracellular Wnt receptors, triggering the canonical Wnt signaling pathway to increase expression of target genes. Also regulates the canonical Wnt/beta-catenin-dependent pathway and non-canonical Wnt signaling by acting as an inhibitor of ZNRF3, an important regulator of the Wnt signaling pathway. During embryonic development, plays a crucial role in limb specification, amplifying the Wnt signaling pathway independently of LGR4-6 receptors, possibly by acting as a direct antagonistic ligand to RNF43 and ZNRF3, hence governing the number of limbs an embryo should form. In Homo sapiens (Human), this protein is R-spondin-2 (RSPO2).